The sequence spans 75 residues: Psi-conotoxin PIIIE (75 aa).

An N-terminal signal peptide occupies residues 1-19 (MSKLGALLTICLLLFPITA). The propeptide occupies 20–50 (LLMDGDQPADRPAERMDYDISSEVHRLLERR). Proline 52, proline 53, and proline 64 each carry 4-hydroxyproline. Cystine bridges form between cysteine 54–cysteine 66, cysteine 55–cysteine 71, and cysteine 60–cysteine 72. Glycine 74 carries the glycine amide modification.

In terms of tissue distribution, expressed by the venom duct.

The protein localises to the secreted. In terms of biological role, psi-conotoxins act on postsynaptic membranes, and act as non-competitive antagonist of nicotinic acetylcholine receptors (nAChR). Is more toxic than Psi-conotoxin PIIIF. In vivo, has paralytic activity when injected intraperitoneally into goldfish. The sequence is that of Psi-conotoxin PIIIE from Conus purpurascens (Purple cone).